The sequence spans 226 residues: CRISPR-associated endonuclease Cas3-HD (226 aa).

An HD Cas3-type domain is found at 9 to 204 (GRDCLQTYED…HVLTVCDNWG (196 aa)). Positions 56, 74, 101, and 102 each coordinate Mg(2+).

Belongs to the CRISPR-associated nuclease Cas3-HD family. As to quaternary structure, monomer. Can form a Cascade complex with Csa5, Cas7, Cas5a, Cas3 and Cas8a2. Mg(2+) serves as cofactor.

CRISPR (clustered regularly interspaced short palindromic repeat), is an adaptive immune system that provides protection against mobile genetic elements (viruses, transposable elements and conjugative plasmids). CRISPR clusters contain sequences complementary to antecedent mobile elements and target invading nucleic acids. CRISPR clusters are transcribed and processed into CRISPR RNA (crRNA). Cas3 plus Cascade participate in CRISPR interference, the third stage of CRISPR immunity. Acts as a ssDNA and ssRNA nuclease, probably with both exo- and endonuclease activities. Activity is higher for DNA than RNA. The polypeptide is CRISPR-associated endonuclease Cas3-HD (cas3') (Thermoproteus tenax (strain ATCC 35583 / DSM 2078 / JCM 9277 / NBRC 100435 / Kra 1)).